Here is a 460-residue protein sequence, read N- to C-terminus: Inactive 7-epi-sesquithujene synthase (460 aa).

The Mg(2+) site is built by D308 and D312. 2 residues coordinate substrate: D308 and D312. The DDXXD motif motif lies at 308-312 (DDMFD).

This sequence belongs to the terpene synthase family. Monomer. Requires Mg(2+) as cofactor. Mn(2+) is required as a cofactor.

Its subcellular location is the cytoplasm. Its pathway is secondary metabolite biosynthesis; terpenoid biosynthesis. Functionally, non-functional sesquiterpene synthase due to a frameshift removing part of the catalytic site. This chain is Inactive 7-epi-sesquithujene synthase, found in Zea mays (Maize).